The chain runs to 124 residues: Small ribosomal subunit protein uS12 (124 aa).

Residues 11-20 (GRKRLKKKSK) show a composition bias toward basic residues. The segment at 11-30 (GRKRLKKKSKSPALENNPQK) is disordered. A 3-methylthioaspartic acid modification is found at aspartate 89. A disordered region spans residues 105–124 (EGVANRRQSRSRYGAKKPKK). Basic residues predominate over residues 111 to 124 (RQSRSRYGAKKPKK).

Belongs to the universal ribosomal protein uS12 family. Part of the 30S ribosomal subunit. Contacts proteins S8 and S17. May interact with IF1 in the 30S initiation complex.

Its function is as follows. With S4 and S5 plays an important role in translational accuracy. Functionally, interacts with and stabilizes bases of the 16S rRNA that are involved in tRNA selection in the A site and with the mRNA backbone. Located at the interface of the 30S and 50S subunits, it traverses the body of the 30S subunit contacting proteins on the other side and probably holding the rRNA structure together. The combined cluster of proteins S8, S12 and S17 appears to hold together the shoulder and platform of the 30S subunit. In Kosmotoga olearia (strain ATCC BAA-1733 / DSM 21960 / TBF 19.5.1), this protein is Small ribosomal subunit protein uS12.